The sequence spans 168 residues: Transmembrane protein 31 (168 aa).

Positions 1 to 11 are enriched in basic and acidic residues; the sequence is MRLTEKSEGEQ. Residues 1 to 63 form a disordered region; that stretch reads MRLTEKSEGE…LPSRRTPTTS (63 aa). Composition is skewed to polar residues over residues 13–22 and 35–48; these read LKPNNSNAPN and HTPA…ADTQ. Over residues 49 to 63 the composition is skewed to low complexity; sequence PSRCRLPSRRTPTTS. A run of 2 helical transmembrane segments spans residues 119 to 139 and 148 to 168; these read IGLP…YKFF and FFIL…LIFF.

Its subcellular location is the membrane. The sequence is that of Transmembrane protein 31 (TMEM31) from Homo sapiens (Human).